Consider the following 333-residue polypeptide: cGAMP-activated phospholipase (333 aa).

Positions 10-191 (LALSGGGYRG…VGNAPGLFGL (182 aa)) constitute a PNPLA domain. The GXGXXG signature appears at 14–19 (GGGYRG). The GXSXG motif lies at 46-50 (GTSAG). The active-site Nucleophile is the Ser-48. Residue Asp-178 is the Proton acceptor of the active site. Residues 178 to 180 (DGG) carry the DGA/G motif.

This sequence belongs to the patatin family.

The catalysed reaction is a 1,2-diacyl-sn-glycero-3-phosphocholine + H2O = a 2-acyl-sn-glycero-3-phosphocholine + a fatty acid + H(+). It carries out the reaction 1,2-di-(9Z-octadecenoyl)-sn-glycero-3-phosphoethanolamine + 2 H2O = sn-glycero-3-phosphoethanolamine + 2 (9Z)-octadecenoate + 2 H(+). Its activity is regulated as follows. Phospholipase activity is specifically activated upon cGAMP binding, which is produced by the cognate cyclic nucleotide synthase encoded in the same operon. Is not activated by cyclic dinucleotides 2',3'-cGAMP, c-diAMP or 3',3'-c-diGMP. Effector phospholipase of a CBASS antiviral system. CBASS (cyclic oligonucleotide-based antiphage signaling system) provides immunity against bacteriophages. The CD-NTase protein (CdnA) synthesizes cyclic nucleotides in response to infection; these serve as specific second messenger signals. The signals activate a diverse range of effectors, leading to bacterial cell death and thus abortive phage infection. A type II-A(GA) CBASS system. Functionally, phospholipase that is activated upon binding to the cyclic dinucleotide (CDN) second messenger 3',3'-cyclic GMP-AMP (cGAMP). Degrades phospholipids in the cell membrane. Its function is as follows. The capV-cdnA-cap2-cap3 operon provides about 10(4)-fold protection in strain BWHPSA011 against infection by phage PaMx41. In P.aeruginosa strain PAO1 it confers protection against phages PaMx41 and JBD18 but not JBD67 (JBD18 and JBD67 do not replicate in BWHPSA011 / Pa011). When acb2 in JBD67 is deleted this CBASS operon then protects against JDB67 also. This CBASS system limits prophage induction of lysogenized JBD67 as well as viral lytic replication. This Pseudomonas aeruginosa (strain BWHPSA011 / Pa011) protein is cGAMP-activated phospholipase.